A 140-amino-acid polypeptide reads, in one-letter code: MALERTFSIIKPDATRRNLTGAINAKFEEAGLRIVAQKRIHMTKAQAGKFYAVHAERPFYDELCEFMSSAPVVVQVLEGEGAIAKNREIMGATNPADAAPGTIRAEFAESVGENSVHGSDAPETAAEEIAYFFSGLELVG.

Positions 11, 59, 87, 93, 104, and 114 each coordinate ATP. The Pros-phosphohistidine intermediate role is filled by histidine 117.

This sequence belongs to the NDK family. Homotetramer. The cofactor is Mg(2+).

It is found in the cytoplasm. The enzyme catalyses a 2'-deoxyribonucleoside 5'-diphosphate + ATP = a 2'-deoxyribonucleoside 5'-triphosphate + ADP. It carries out the reaction a ribonucleoside 5'-diphosphate + ATP = a ribonucleoside 5'-triphosphate + ADP. In terms of biological role, major role in the synthesis of nucleoside triphosphates other than ATP. The ATP gamma phosphate is transferred to the NDP beta phosphate via a ping-pong mechanism, using a phosphorylated active-site intermediate. This is Nucleoside diphosphate kinase from Ruegeria sp. (strain TM1040) (Silicibacter sp.).